The chain runs to 72 residues: MAKEELIEFEGVVSEALPDNRFRVQLENGVEVWAYASGKMQKHRIRILAGDRVKLEMSPYDLTKGRINYRHK.

The S1-like domain maps to 1–72 (MAKEELIEFE…TKGRINYRHK (72 aa)).

This sequence belongs to the IF-1 family. In terms of assembly, component of the 30S ribosomal translation pre-initiation complex which assembles on the 30S ribosome in the order IF-2 and IF-3, IF-1 and N-formylmethionyl-tRNA(fMet); mRNA recruitment can occur at any time during PIC assembly.

The protein localises to the cytoplasm. One of the essential components for the initiation of protein synthesis. Stabilizes the binding of IF-2 and IF-3 on the 30S subunit to which N-formylmethionyl-tRNA(fMet) subsequently binds. Helps modulate mRNA selection, yielding the 30S pre-initiation complex (PIC). Upon addition of the 50S ribosomal subunit IF-1, IF-2 and IF-3 are released leaving the mature 70S translation initiation complex. In Ralstonia nicotianae (strain ATCC BAA-1114 / GMI1000) (Ralstonia solanacearum), this protein is Translation initiation factor IF-1 2.